A 260-amino-acid polypeptide reads, in one-letter code: Ribosomal RNA small subunit methyltransferase G (260 aa).

Residues Gly-94, Phe-99, 117–119 (DSS), 145–146 (AE), and Arg-164 each bind S-adenosyl-L-methionine.

The protein belongs to the methyltransferase superfamily. RNA methyltransferase RsmG family.

It is found in the cytoplasm. Functionally, specifically methylates the N7 position of a guanine in 16S rRNA. This is Ribosomal RNA small subunit methyltransferase G from Synechococcus sp. (strain JA-3-3Ab) (Cyanobacteria bacterium Yellowstone A-Prime).